Here is a 427-residue protein sequence, read N- to C-terminus: O-methyltransferase PaMT (427 aa).

2 residues coordinate S-adenosyl-L-methionine: tryptophan 230 and aspartate 281. Catalysis depends on histidine 326, which acts as the Proton acceptor.

This sequence belongs to the class I-like SAM-binding methyltransferase superfamily. Cation-independent O-methyltransferase family. COMT subfamily. S-adenosyl-L-methionine is required as a cofactor.

Its pathway is mycotoxin biosynthesis. Its function is as follows. O-methyltransferase; part of the 2 gene clusters that mediate the biosynthesis of fusicoccins, diterpene glucosides that display phytohormone-like activity and function as potent activators of plasma membrane H(+)-ATPases in plants by modifying 14-3-3 proteins and cause the plant disease constriction canker. The first step in the pathway is performed by the fusicoccadiene synthase PaFS that possesses both prenyl transferase and terpene cyclase activity, converting isopentenyl diphosphate and dimethylallyl diphosphate into geranylgeranyl diphosphate (GGDP) and successively converting GGDP into fusicocca-2,10(14)-diene, a precursor for fusicoccin H. The second step is the oxidation at the C-8 position by the cytochrome P450 monooxygenase PaP450-2 to yield fusicocca-2,10(14)-diene-8-beta-ol. The cytochrome P450 monooxygenase PaP450-1 then catalyzes the hydroxylation at the C-16 position to produce fusicocca-2,10(14)-diene-8-beta,16-diol. The dioxygenase fc-dox then catalyzes the 16-oxydation of fusicocca-2,10(14)-diene-8-beta,16-diol to yield an aldehyde (8-beta-hydroxyfusicocca-1,10(14)-dien-16-al). The short-chain dehydrogenase/reductase fc-sdr catalyzes the reduction of the aldehyde to yield fusicocca-1,10(14)-diene-8-beta,16-diol. The next step is the hydroxylation at C-9 performed by the cytochrome P450 monooxygenase PaP450-3 that leads to fusicoccin H aglycon which is glycosylated to fusicoccin H by the O-glycosyltransferase PaGT. Hydroxylation at C-12 by the cytochrome P450 monooxygenase PaP450-4 leads then to the production of fusicoccin Q and is followed by methylation by the O-methyltransferase PaMT to yield fusicoccin P. Fusicoccin P is further converted to fusicoccin J via prenylation by the O-glucose prenyltransferase PaPT. Cytochrome P450 monooxygenase PaP450-5 then performs hydroxylation at C-19 to yield dideacetyl-fusicoccin A which is acetylated to 3'-O-deacetyl-fusicoccin A by the O-acetyltransferase PaAT-2. Finally, a another acetylation by the O-acetyltransferase PaAT-1 yields fusicoccin A. This is O-methyltransferase PaMT from Phomopsis amygdali (Fusicoccum amygdali).